A 367-amino-acid chain; its full sequence is Germination protease (367 aa).

The propeptide occupies Met1–Asp15.

The protein belongs to the peptidase A25 family. Homotetramer. In terms of processing, autoproteolytically processed. The inactive tetrameric zymogen termed p46 autoprocesses to a smaller form termed p41, which is active only during spore germination.

It catalyses the reaction Endopeptidase action with P4 Glu or Asp, P1 preferably Glu &gt; Asp, P1' hydrophobic and P2' Ala.. Initiates the rapid degradation of small, acid-soluble proteins during spore germination. This chain is Germination protease, found in Bacillus cereus (strain B4264).